The primary structure comprises 430 residues: Long-chain specific acyl-CoA dehydrogenase, mitochondrial (430 aa).

The N-terminal 30 residues, 1-30 (MAARLLLRSLRVLSARSATLPPPSARCSHS), are a transit peptide targeting the mitochondrion. Position 42 is an N6-acetyllysine (Lys-42). Residues Ser-54 and Ser-55 each carry the phosphoserine modification. N6-acetyllysine; alternate occurs at positions 66 and 81. N6-succinyllysine; alternate occurs at positions 66 and 81. N6-acetyllysine occurs at positions 92 and 95. Lys-165 bears the N6-succinyllysine mark. 170 to 179 (IAMTEPGAGS) contributes to the FAD binding site. Ser-179 is a substrate binding site. Ser-191 carries the phosphoserine modification. 203–205 (FIT) provides a ligand contact to FAD. A substrate-binding site is contributed by 227-228 (AH). Lys-240 is subject to N6-succinyllysine. 2 positions are modified to N6-acetyllysine; alternate: Lys-254 and Lys-279. N6-succinyllysine; alternate is present on residues Lys-254 and Lys-279. Substrate-binding positions include Tyr-282 and 289–292 (PQER). Glu-291 serves as the catalytic Proton acceptor. Arg-317 contacts FAD. N6-acetyllysine is present on Lys-318. Lys-322 carries the post-translational modification N6-acetyllysine; alternate. Lys-322 is subject to N6-succinyllysine; alternate. Gln-328 is a binding site for FAD. N6-acetyllysine is present on Lys-358. The residue at position 362 (Ser-362) is a Phosphoserine. 385 to 389 (QLHGG) is an FAD binding site. 412–413 (GG) provides a ligand contact to substrate. Position 414-416 (414-416 (TNE)) interacts with FAD.

This sequence belongs to the acyl-CoA dehydrogenase family. As to quaternary structure, homotetramer. FAD serves as cofactor. Acetylation at Lys-318 and Lys-322 in proximity of the cofactor-binding sites strongly reduces catalytic activity. These sites are deacetylated by SIRT3.

The protein localises to the mitochondrion matrix. The enzyme catalyses a long-chain 2,3-saturated fatty acyl-CoA + oxidized [electron-transfer flavoprotein] + H(+) = a long-chain (2E)-enoyl-CoA + reduced [electron-transfer flavoprotein]. The catalysed reaction is octanoyl-CoA + oxidized [electron-transfer flavoprotein] + H(+) = (2E)-octenoyl-CoA + reduced [electron-transfer flavoprotein]. It catalyses the reaction decanoyl-CoA + oxidized [electron-transfer flavoprotein] + H(+) = (2E)-decenoyl-CoA + reduced [electron-transfer flavoprotein]. It carries out the reaction dodecanoyl-CoA + oxidized [electron-transfer flavoprotein] + H(+) = (2E)-dodecenoyl-CoA + reduced [electron-transfer flavoprotein]. The enzyme catalyses tetradecanoyl-CoA + oxidized [electron-transfer flavoprotein] + H(+) = (2E)-tetradecenoyl-CoA + reduced [electron-transfer flavoprotein]. The catalysed reaction is oxidized [electron-transfer flavoprotein] + hexadecanoyl-CoA + H(+) = (2E)-hexadecenoyl-CoA + reduced [electron-transfer flavoprotein]. It catalyses the reaction octadecanoyl-CoA + oxidized [electron-transfer flavoprotein] + H(+) = (2E)-octadecenoyl-CoA + reduced [electron-transfer flavoprotein]. It carries out the reaction (5E)-tetradecenoyl-CoA + oxidized [electron-transfer flavoprotein] + H(+) = (2E,5E)-tetradecadienoyl-CoA + reduced [electron-transfer flavoprotein]. The enzyme catalyses (5Z)-tetradecenoyl-CoA + oxidized [electron-transfer flavoprotein] + H(+) = (2E,5Z)-tetradecadienoyl-CoA + reduced [electron-transfer flavoprotein]. The catalysed reaction is oxidized [electron-transfer flavoprotein] + (9Z)-octadecenoyl-CoA + H(+) = (2E,9Z)-octadecadienoyl-CoA + reduced [electron-transfer flavoprotein]. It catalyses the reaction hexanoyl-CoA + oxidized [electron-transfer flavoprotein] + H(+) = (2E)-hexenoyl-CoA + reduced [electron-transfer flavoprotein]. It carries out the reaction eicosanoyl-CoA + oxidized [electron-transfer flavoprotein] + H(+) = (2E)-eicosenoyl-CoA + reduced [electron-transfer flavoprotein]. The enzyme catalyses docosanoyl-CoA + oxidized [electron-transfer flavoprotein] + H(+) = (2E)-docosenoyl-CoA + reduced [electron-transfer flavoprotein]. The catalysed reaction is tetracosanoyl-CoA + oxidized [electron-transfer flavoprotein] + H(+) = (2E)-tetracosenoyl-CoA + reduced [electron-transfer flavoprotein]. Its pathway is lipid metabolism; mitochondrial fatty acid beta-oxidation. Inhibited by crotonyl-CoA, 2-octenoyl-CoA and 2-hexadecenoyl-CoA. Long-chain specific acyl-CoA dehydrogenase is one of the acyl-CoA dehydrogenases that catalyze the first step of mitochondrial fatty acid beta-oxidation, an aerobic process breaking down fatty acids into acetyl-CoA and allowing the production of energy from fats. The first step of fatty acid beta-oxidation consists in the removal of one hydrogen from C-2 and C-3 of the straight-chain fatty acyl-CoA thioester, resulting in the formation of trans-2-enoyl-CoA. Among the different mitochondrial acyl-CoA dehydrogenases, long-chain specific acyl-CoA dehydrogenase can act on saturated and unsaturated acyl-CoAs with 6 to 24 carbons with a preference for 8 to 18 carbons long primary chains. The protein is Long-chain specific acyl-CoA dehydrogenase, mitochondrial of Rattus norvegicus (Rat).